We begin with the raw amino-acid sequence, 618 residues long: Sphingomyelin phosphodiesterase 2 (618 aa).

The N-terminal stretch at 1 to 22 (MQQPLIILGIGIVLALVSNVES) is a signal peptide. Positions 68-151 (RKMSCLFCTF…AFIANCGHSD (84 aa)) constitute a Saposin B-type domain. 3 disulfides stabilise this stretch: Cys-72–Cys-147, Cys-75–Cys-140, and Cys-103–Cys-114. Asn-89 carries an N-linked (GlcNAc...) asparagine glycan. Asn-159 carries N-linked (GlcNAc...) asparagine glycosylation. Asp-189 and His-191 together coordinate Zn(2+). Intrachain disulfides connect Cys-204-Cys-216 and Cys-217-Cys-249. Asp-278 is a Zn(2+) binding site. Residue Asn-298 is glycosylated (N-linked (GlcNAc...) asparagine). Asn-318, His-427, His-461, and His-463 together coordinate Zn(2+). Cys-387 and Cys-435 are disulfide-bonded. Residues Asn-525 and Asn-568 are each glycosylated (N-linked (GlcNAc...) asparagine). Intrachain disulfides connect Cys-588–Cys-594 and Cys-600–Cys-613.

The protein belongs to the acid sphingomyelinase family. Zn(2+) serves as cofactor.

Its subcellular location is the secreted. The catalysed reaction is a sphingomyelin + H2O = phosphocholine + an N-acylsphing-4-enine + H(+). It carries out the reaction an N-acyl-15-methylhexadecasphing-4-enine-1-phosphocholine + H2O = an N-acyl-15-methylhexadecasphing-4-enine + phosphocholine + H(+). It functions in the pathway lipid metabolism; sphingolipid metabolism. Sphingomyelin phosphodiesterase (sphingomyelinase) that converts sphingomyelin (N-acyl-sphingoid-1-phosphocholine) to ceramide (N-acyl-sphingoid base) and phosphocholine at acidic pH. Displays its enzymatic activity when secreted. May play distinct roles in signaling. The protein is Sphingomyelin phosphodiesterase 2 (asm-2) of Caenorhabditis elegans.